Reading from the N-terminus, the 281-residue chain is Transcription factor lfc1 (281 aa).

The segment at residues 60-87 (CLTCRMKKIKCDETKPTCARCTHGQREC) is a DNA-binding region (zn(2)-C6 fungal-type).

The protein localises to the nucleus. In terms of biological role, transcription factor that acts as a negative regulator of basidioma development via repressing the expression of genes involved in basidioma development, including hydrophobins such as Hyd-1 and Hyd-8, lectins such as JRL1, as well as the fruiting body differentiation gene FVFD16. The protein is Transcription factor lfc1 of Flammulina velutipes (Agaricus velutipes).